A 662-amino-acid polypeptide reads, in one-letter code: ATP-dependent RNA helicase DDX3X (662 aa).

Ser-2 is subject to N-acetylserine. Residues 2 to 139 are required for TBK1 and IKBKE-dependent IFNB1 activation; sequence SHVAVENALG…KSDEDDWSKP (138 aa). A Nuclear export signal motif is present at residues 12–21; it reads LDQQFAGLDL. A disordered region spans residues 19-144; that stretch reads LDLNSSDNQS…DWSKPLPPSE (126 aa). Polar residues predominate over residues 21-34; it reads LNSSDNQSGGSTAS. The tract at residues 38 to 44 is interaction with EIF4E; that stretch reads YIPPHLR. Residues 44 to 68 show a composition bias toward basic and acidic residues; sequence RNREATKGFYDKDSSGWSSSKDKDA. At Lys-55 the chain carries N6-acetyllysine. Residues 70–89 are compositionally biased toward low complexity; it reads SSFGSRSDSRGKSSFFSDRG. The tract at residues 81–90 is interaction with VACV protein K7; that stretch reads KSSFFSDRGS. A phosphoserine mark is found at Ser-82, Ser-86, and Ser-90. Residues 88–123 form an involved in binding to RNA G-quadruplex region; sequence RGSGSRGRFDDRGRSDYDGIGSRGDRSGFGKFERGG. Residues 94 to 130 show a composition bias toward basic and acidic residues; that stretch reads GRFDDRGRSDYDGIGSRGDRSGFGKFERGGNSRWCDK. The segment at 100 to 110 is interaction with IKBKE; it reads GRSDYDGIGSR. Positions 100 to 662 are interaction with GSK3B; it reads GRSDYDGIGS…NSQGVDWWGN (563 aa). Residue Arg-101 is modified to Omega-N-methylarginine. Ser-102 is modified (phosphoserine; by IKKE). Residue Tyr-104 is modified to Phosphotyrosine. Arg-110 is modified (omega-N-methylarginine). Position 118 is an N6-acetyllysine (Lys-118). The residue at position 131 (Ser-131) is a Phosphoserine. The interaction with CHUK stretch occupies residues 139–172; it reads PLPPSERLEQELFSGGNTGINFEKYDDIPVEATG. The Q motif motif lies at 180-208; it reads ESFSDVEMGEIIMGNIELTRYTRPTPVQK. Ser-181 bears the Phosphoserine; by TBK1; in vitro mark. A Phosphoserine; by TBK1 modification is found at Ser-183. 200-207 lines the ATP pocket; the sequence is YTRPTPVQ. A Helicase ATP-binding domain is found at 211-403; sequence IPIIKEKRDL…RDFLDEYIFL (193 aa). Residue Lys-215 forms a Glycyl lysine isopeptide (Lys-Gly) (interchain with G-Cter in SUMO2) linkage. 224-231 lines the ATP pocket; that stretch reads AQTGSGKT. Ser-240 carries the post-translational modification Phosphoserine; by TBK1; in vitro. The segment at 250–259 is involved in stimulation of ATPase activity by DNA and RNA, nucleic acid binding and unwinding and HIV-1 replication; sequence ALRAMKENGR. The residue at position 269 (Ser-269) is a Phosphoserine; by TBK1; in vitro. The DEAD box motif lies at 347 to 350; the sequence is DEAD. Residues 409–662 form an interaction with HCV core protein region; the sequence is GSTSENITQK…NSQGVDWWGN (254 aa). Positions 414 to 575 constitute a Helicase C-terminal domain; it reads NITQKVVWVE…EVPSWLENMA (162 aa). A Phosphoserine; by CSNK1E and TBK1; in vitro modification is found at Ser-429. Position 438 is a phosphothreonine; by TBK1; in vitro (Thr-438). Ser-442 and Ser-456 each carry phosphoserine; by TBK1; in vitro. Residue Thr-469 is modified to Phosphothreonine; by CSNK1E; in vitro. Ser-470 bears the Phosphoserine; by CSNK1E; in vitro mark. Ser-520 carries the post-translational modification Phosphoserine; by TBK1; in vitro. Residues 536-661 form an interaction with NXF1 region; sequence GNLGLATSFF…YNSQGVDWWG (126 aa). Thr-542 carries the post-translational modification Phosphothreonine; by TBK1; in vitro. At Ser-543 the chain carries Phosphoserine; by CSNK1E and TBK1; in vitro. The residue at position 592 (Arg-592) is an Omega-N-methylarginine. Phosphoserine occurs at positions 594, 605, and 612. The disordered stretch occupies residues 601–634; that stretch reads DYRQSSGASSSSFSSSRASSSRSGGGGHGSSRGF. Residues 604–622 are compositionally biased toward low complexity; sequence QSSGASSSSFSSSRASSSR. An omega-N-methylarginine mark is found at Arg-617 and Arg-632. The span at 623–634 shows a compositional bias: gly residues; that stretch reads SGGGGHGSSRGF.

The protein belongs to the DEAD box helicase family. DDX3/DED1 subfamily. Homodimer; can bind RNA as a monomer and as a dimer/oligomer. Interacts with TDRD3. Interacts (when phosphorylated at Ser-102) with IRF3; the interaction facilitates the phosphorylation and activation of IRF3 by IKBKE. Directly interacts with XPO1/CRM1. The interaction with XPO1/CMR1 is dependent on the DDX3X nuclear export signal motif and XPO1 interaction with GTPase RAN in its active GTP-bound form. Weakly interacts with TBKBP1/SINTBAD. Directly interacts with TRAF3; this interaction stimulates TRAF3 'Lys-63' ubiquitination. Interacts with CSNK1E in a Wnt-dependent manner; this interaction greatly enhances CSNK1E affinity for ATP, stimulates its kinase activity and promotes CSNK1E-mediated DVL2 phosphorylation. In the presence of RNA, the interaction is decreased. Also interacts with CSNK1D and stimulates its kinase activity. Interacts with TRPV4; this interaction is decreased when the TRPV4 channel is activated, leading to DDX3X relocalization to the nucleus. Interacts with MAP3K14/NIK. Directly interacts with CHUK/IKKA after physiological activation of the TLR7 and TLR8 pathways; this interaction enhances CHUK autophosphorylation. May associate with EIF4F complex, composed of at least EIF4A, EIF4E and EIF4G1/EIF4G3. Directly interacts with EIF4E in an RNA-independent manner; this interaction enhances EIF4E cap-binding ability. Directly interacts with EIF4G1 in an RNA-independent manner. DDX3X competes with EIF4G1 for interaction with EIF4E. Interacts with EIF4A1 and EIF2S1 in an RNA-independent manner. Associates with the eukaryotic translation initiation factor 3 (eIF-3) complex, including with EIF3B and EIF3C subunits. Directly interacts with IKBKE/IKKE; this interaction stimulates IKBKE activating autophosphorylation and is induced upon viral infection. Interacts with TBK1. Interacts with SP1; this interaction potentiates SP1-induced CDKN1A/WAF1/CIP1 transcription. Interacts with GSK3A and GSK3B. Interacts with several death receptors, inclusing FAS, TNFRSF10A and TNFRSF10B. Recruited to TNFRSF10B in the absence of receptor stimulation. When TNFRSF10B is stimulated, further recruited to the receptor and cleaved by caspases. A large proteolytic fragment remains associated with TNFRSF10B. Interacts (via C-terminus) with NXF1/TAP; this interaction may be partly involved in DDX3X nuclear export and in NXF1 localization to stress granules. Identified in an mRNP complex, composed of at least DHX9, DDX3X, ELAVL1, HNRNPU, IGF2BP1/2, ILF3, PABPC1, PCBP2, PTBP2, STAU1, STAU2, SYNCRIP and YBX1. The interaction with IGF2BP1/2 is RNA-dependent. Directly interacts with PABPC1/PABP1 in an RNA-independent manner. This interaction increases in stressed cells and decreases during cell recovery. Interacts (via C-terminus) with MAVS/IPS-1; this interaction occurs rapidly, but transiently after Sendai virus infection. The interaction potentiates MAVS-mediated IFNB induction. Interacts with ERCC6/CBS. Interacts with DHX33 in an RNA-independent manner. Interacts with DDX5 in the cytoplasm; this interaction may be more efficient when both proteins are unphosphorylated. Interacts with RIGI/RIG-1. Interacts with IFIH1/MDA5. Interacts with NCAPH; this interaction may be important for the NCAPH localization at condensing chromosomes during mitosis. Interacts with NLRP3 (via NACHT domain) under inflammasome-activating conditions. Interacts with CAPRIN1. Interacts with HNF4A and NR0B2/SHP in an RNA-independent manner; this interaction disrupts the interaction between HNF4 and NR0B2 that forms inactive heterodimers and enhances the formation of active HNF4 homodimers. Interacts with CREBBP/CBP. Interacts with EP300/p300. Interacts with gamma-tubulin. Interacts with phosphorylated TP53. Directly interacts with RELA/p65; this interaction may trap RELA in the cytoplasm, impairing nuclear relocalization upon TNF activating signals. In terms of assembly, (Microbial infection) Interacts with hepatitis B virus (HBV) polymerase in the cytoplasm; this interaction may inhibit DDX3X interaction with the IKBKE/TBK1 complex, and hence impair IKBKE/TBK1-mediated increase in IFNB production. As to quaternary structure, (Microbial infection) Directly interacts with hepatitis C virus (HCV) core protein in the cytoplasm. (Microbial infection) Interacts with vaccinia virus (VACV) protein K7. In terms of assembly, (Microbial infection) Interacts with HIV-1 protein Rev. As to quaternary structure, (Microbial infection) Interacts with Venezuelan equine encephalitis virus non-structural protein 3. In terms of processing, phosphorylated by TBK1; the phosphorylation is required for the synergistic induction of IFNB mediated by TBK1 and DDX3X. Phosphorylated by IKBKE at Ser-102 after ssRNA viral infection; enhances the induction of INFB promoter by IRF3. The cytoplasmic form is highly phosphorylated in the G1/S phase of the cell cycle and much less at G2/M. Phosphorylation by CSNK1E may inhibit RNA-stimulated ATPase activity. Post-translationally, upon stimulation of death receptors, including TNFRSF10B, recruited to receptors and cleaved by caspases. Proteolytic fragments remain associated with the receptors. This cleavage presumably inactivates DDX3X anti-apoptotic function. Ubiquitinated by RNF39 via 'Lys-48'-linked ubiquitination; leading to proteasomal degradation. As to expression, widely expressed. In testis, expressed in spermatids. Expressed in epidermis and liver (at protein level).

It is found in the cell membrane. The protein localises to the nucleus. The protein resides in the cytoplasm. It localises to the stress granule. Its subcellular location is the inflammasome. It is found in the cell projection. The protein localises to the lamellipodium. The protein resides in the cytoskeleton. It localises to the microtubule organizing center. Its subcellular location is the centrosome. It carries out the reaction ATP + H2O = ADP + phosphate + H(+). Its function is as follows. Multifunctional ATP-dependent RNA helicase. The ATPase activity can be stimulated by various ribo-and deoxynucleic acids indicative for a relaxed substrate specificity. In vitro can unwind partially double-stranded DNA with a preference for 5'-single-stranded DNA overhangs. Binds RNA G-quadruplex (rG4s) structures, including those located in the 5'-UTR of NRAS mRNA. Involved in many cellular processes, which do not necessarily require its ATPase/helicase catalytic activities. Involved in transcription regulation. Positively regulates CDKN1A/WAF1/CIP1 transcription in an SP1-dependent manner, hence inhibits cell growth. This function requires its ATPase, but not helicase activity. CDKN1A up-regulation may be cell-type specific. Binds CDH1/E-cadherin promoter and represses its transcription. Potentiates HNF4A-mediated MTTP transcriptional activation; this function requires ATPase, but not helicase activity. Facilitates HNF4A acetylation, possibly catalyzed by CREBBP/EP300, thereby increasing the DNA-binding affinity of HNF4 to its response element. In addition, disrupts the interaction between HNF4 and SHP that forms inactive heterodimers and enhances the formation of active HNF4 homodimers. By promoting HNF4A-induced MTTP expression, may play a role in lipid homeostasis. May positively regulate TP53 transcription. Associates with mRNPs, predominantly with spliced mRNAs carrying an exon junction complex (EJC). Involved in the regulation of translation initiation. Not involved in the general process of translation, but promotes efficient translation of selected complex mRNAs, containing highly structured 5'-untranslated regions (UTR). This function depends on helicase activity. Might facilitate translation by resolving secondary structures of 5'-UTRs during ribosome scanning. Alternatively, may act prior to 43S ribosomal scanning and promote 43S pre-initiation complex entry to mRNAs exhibiting specific RNA motifs, by performing local remodeling of transcript structures located close to the cap moiety. Independently of its ATPase activity, promotes the assembly of functional 80S ribosomes and disassembles from ribosomes prior to the translation elongation process. Positively regulates the translation of cyclin E1/CCNE1 mRNA and consequently promotes G1/S-phase transition during the cell cycle. May activate TP53 translation. Required for endoplasmic reticulum stress-induced ATF4 mRNA translation. Independently of its ATPase/helicase activity, enhances IRES-mediated translation; this activity requires interaction with EIF4E. Independently of its ATPase/helicase activity, has also been shown specifically repress cap-dependent translation, possibly by acting on translation initiation factor EIF4E. Involved in innate immunity, acting as a viral RNA sensor. Binds viral RNAs and promotes the production of type I interferon (IFN-alpha and IFN-beta). Potentiate MAVS/RIGI-mediated induction of IFNB in early stages of infection. Enhances IFNB1 expression via IRF3/IRF7 pathway and participates in NFKB activation in the presence of MAVS and TBK1. Involved in TBK1 and IKBKE-dependent IRF3 activation leading to IFNB induction, acts as a scaffolding adapter that links IKBKE and IRF3 and coordinates their activation. Involved in the TLR7/TLR8 signaling pathway leading to type I interferon induction, including IFNA4 production. In this context, acts as an upstream regulator of IRF7 activation by MAP3K14/NIK and CHUK/IKKA. Stimulates CHUK autophosphorylation and activation following physiological activation of the TLR7 and TLR8 pathways, leading to MAP3K14/CHUK-mediated activatory phosphorylation of IRF7. Also stimulates MAP3K14/CHUK-dependent NF-kappa-B signaling. Negatively regulates TNF-induced IL6 and IL8 expression, via the NF-kappa-B pathway. May act by interacting with RELA/p65 and trapping it in the cytoplasm. May also bind IFNB promoter; the function is independent of IRF3. Involved in both stress and inflammatory responses. Independently of its ATPase/helicase activity, required for efficient stress granule assembly through its interaction with EIF4E, hence promotes survival in stressed cells. Independently of its helicase activity, regulates NLRP3 inflammasome assembly through interaction with NLRP3 and hence promotes cell death by pyroptosis during inflammation. This function is independent of helicase activity. Therefore DDX3X availability may be used to interpret stress signals and choose between pro-survival stress granules and pyroptotic NLRP3 inflammasomes and serve as a live-or-die checkpoint in stressed cells. In association with GSK3A/B, negatively regulates extrinsic apoptotic signaling pathway via death domain receptors, including TNFRSF10B, slowing down the rate of CASP3 activation following death receptor stimulation. Cleavage by caspases may inactivate DDX3X and relieve the inhibition. Independently of its ATPase/helicase activity, allosteric activator of CSNK1E. Stimulates CSNK1E-mediated phosphorylation of DVL2, thereby involved in the positive regulation of Wnt/beta-catenin signaling pathway. Also activates CSNK1A1 and CSNK1D in vitro, but it is uncertain if these targets are physiologically relevant. ATPase and casein kinase-activating functions are mutually exclusive. May be involved in mitotic chromosome segregation. In terms of biological role, (Microbial infection) Facilitates hepatitis C virus (HCV) replication. During infection, HCV core protein inhibits the interaction between MAVS and DDX3X and therefore impairs MAVS-dependent INFB induction and might recruit DDX3X to HCV replication complex. Functionally, (Microbial infection) Facilitates HIV-1 replication. Acts as a cofactor for XPO1-mediated nuclear export of HIV-1 Rev RNAs. This function is strongly stimulated in the presence of TBK1 and requires DDX3X ATPase activity. (Microbial infection) Facilitates Zika virus (ZIKV) replication. Its function is as follows. (Microbial infection) Facilitates Dengue virus (DENV) replication. In terms of biological role, (Microbial infection) Facilitates Venezuelan equine encephalitis virus (VEEV) replication. This is ATP-dependent RNA helicase DDX3X (DDX3X) from Homo sapiens (Human).